A 510-amino-acid polypeptide reads, in one-letter code: MIWHVQNENFILDSTRIFMKAFHLLLFDGSLIFPECILIFGLILLLMIDSTSDQKDLPWFYFISSTSLVMSITALLFRWREEPMISFSGNFQTNNFNEIFQFLILLCSTLCIPLSVEYIECTEMAITEFLLFVLTATLGGMFLCGANDLITIFVAPECFSFCSYLLSGYTKKDVRSNEATMKYLLMGGASSSILVHAFSWLYGSSGGEIELQEIVNGLINTQMYNSPGISIALLFITVGIGFKLSPAPSHQWTPDVYEGSPTPVVAFLSVTSKVAASASATRIFDIPFYFSSNEWHLLLEILAILSMILGNIIAITQTSMKRMLAYSSIGQIGYVIIGIIVGDSNDGYASMITYMLFYISMNLGTFACIVLFGLRTGTDNIRDYAGLYTKDPFLALSLALCLLSLGGLPPLAGFFGKLYLFRCGWQAGLYSLVLIGLLTSVVSIYYYLKIIKLLMTGRNQEITPHVRNYRRSPLRSNNSIELSMIVCVIASTIPGISMNPIIAIAQDTLF.

A run of 13 helical transmembrane segments spans residues 24 to 44, 57 to 77, 99 to 119, 124 to 144, 149 to 169, 183 to 203, 227 to 247, 295 to 315, 323 to 343, 354 to 374, 395 to 415, 428 to 448, and 484 to 504; these read LLLFDGSLIFPECILIFGLIL, LPWFYFISSTSLVMSITALLF, IFQFLILLCSTLCIPLSVEYI, MAITEFLLFVLTATLGGMFLC, LITIFVAPECFSFCSYLLSGY, YLLMGGASSSILVHAFSWLYG, PGISIALLFITVGIGFKLSPA, WHLLLEILAILSMILGNIIAI, MLAYSSIGQIGYVIIGIIVGD, YMLFYISMNLGTFACIVLFGL, ALSLALCLLSLGGLPPLAGFF, GLYSLVLIGLLTSVVSIYYYL, and MIVCVIASTIPGISMNPIIAI.

Belongs to the complex I subunit 2 family. NDH is composed of at least 16 different subunits, 5 of which are encoded in the nucleus.

The protein localises to the plastid. It is found in the chloroplast thylakoid membrane. The catalysed reaction is a plastoquinone + NADH + (n+1) H(+)(in) = a plastoquinol + NAD(+) + n H(+)(out). It catalyses the reaction a plastoquinone + NADPH + (n+1) H(+)(in) = a plastoquinol + NADP(+) + n H(+)(out). Functionally, NDH shuttles electrons from NAD(P)H:plastoquinone, via FMN and iron-sulfur (Fe-S) centers, to quinones in the photosynthetic chain and possibly in a chloroplast respiratory chain. The immediate electron acceptor for the enzyme in this species is believed to be plastoquinone. Couples the redox reaction to proton translocation, and thus conserves the redox energy in a proton gradient. This chain is NAD(P)H-quinone oxidoreductase subunit 2 B, chloroplastic, found in Jasminum nudiflorum (Winter jasmine).